A 211-amino-acid polypeptide reads, in one-letter code: MPVVAVIDYEMGNLHSVCKGLEKAGATPIITHSHQELTKADAVILPGVGAFDPAVQSLRSRDLEQPIKDTIASGKPFLGICLGLQILFESSAEGTQPGLGIIKGKVRRFISEPGITIPHMGWNQLELTQPKSILWEHLPPQPWVYFVHSYYVDPVEPQVRAATVTHGTQTVTAAIAHENLMAVQFHPEKSSNIGLQILSNFVSQVREKIAA.

The 209-residue stretch at 3–211 (VVAVIDYEMG…VSQVREKIAA (209 aa)) folds into the Glutamine amidotransferase type-1 domain. C81 serves as the catalytic Nucleophile. Active-site residues include H186 and E188.

In terms of assembly, heterodimer of HisH and HisF.

The protein localises to the cytoplasm. It carries out the reaction 5-[(5-phospho-1-deoxy-D-ribulos-1-ylimino)methylamino]-1-(5-phospho-beta-D-ribosyl)imidazole-4-carboxamide + L-glutamine = D-erythro-1-(imidazol-4-yl)glycerol 3-phosphate + 5-amino-1-(5-phospho-beta-D-ribosyl)imidazole-4-carboxamide + L-glutamate + H(+). It catalyses the reaction L-glutamine + H2O = L-glutamate + NH4(+). It participates in amino-acid biosynthesis; L-histidine biosynthesis; L-histidine from 5-phospho-alpha-D-ribose 1-diphosphate: step 5/9. In terms of biological role, IGPS catalyzes the conversion of PRFAR and glutamine to IGP, AICAR and glutamate. The HisH subunit catalyzes the hydrolysis of glutamine to glutamate and ammonia as part of the synthesis of IGP and AICAR. The resulting ammonia molecule is channeled to the active site of HisF. The protein is Imidazole glycerol phosphate synthase subunit HisH of Trichormus variabilis (strain ATCC 29413 / PCC 7937) (Anabaena variabilis).